We begin with the raw amino-acid sequence, 212 residues long: Peptide methionine sulfoxide reductase MsrA (212 aa).

Cys52 is an active-site residue.

The protein belongs to the MsrA Met sulfoxide reductase family.

It carries out the reaction L-methionyl-[protein] + [thioredoxin]-disulfide + H2O = L-methionyl-(S)-S-oxide-[protein] + [thioredoxin]-dithiol. It catalyses the reaction [thioredoxin]-disulfide + L-methionine + H2O = L-methionine (S)-S-oxide + [thioredoxin]-dithiol. Functionally, has an important function as a repair enzyme for proteins that have been inactivated by oxidation. Catalyzes the reversible oxidation-reduction of methionine sulfoxide in proteins to methionine. This Shigella dysenteriae serotype 1 (strain Sd197) protein is Peptide methionine sulfoxide reductase MsrA.